Consider the following 88-residue polypeptide: Small ribosomal subunit protein uS15c (88 aa).

It belongs to the universal ribosomal protein uS15 family. As to quaternary structure, part of the 30S ribosomal subunit.

The protein localises to the plastid. The protein resides in the chloroplast. This chain is Small ribosomal subunit protein uS15c (rps15), found in Capsella bursa-pastoris (Shepherd's purse).